We begin with the raw amino-acid sequence, 180 residues long: Adenine phosphoribosyltransferase (180 aa).

It belongs to the purine/pyrimidine phosphoribosyltransferase family. Homodimer.

The protein localises to the cytoplasm. The enzyme catalyses AMP + diphosphate = 5-phospho-alpha-D-ribose 1-diphosphate + adenine. The protein operates within purine metabolism; AMP biosynthesis via salvage pathway; AMP from adenine: step 1/1. In terms of biological role, catalyzes a salvage reaction resulting in the formation of AMP, that is energically less costly than de novo synthesis. The polypeptide is Adenine phosphoribosyltransferase (Pasteurella multocida (strain Pm70)).